The chain runs to 262 residues: Adenosylcobinamide-GDP ribazoletransferase (262 aa).

Helical transmembrane passes span 43-63 (YFGL…WLTQ), 66-86 (LPAG…TGGF), 120-140 (GALA…ELAL), 146-166 (AGSA…SIIF), 191-211 (LLIL…LAAL), and 242-262 (AAQQ…GNIL).

Belongs to the CobS family. Mg(2+) serves as cofactor.

It is found in the cell inner membrane. The catalysed reaction is alpha-ribazole + adenosylcob(III)inamide-GDP = adenosylcob(III)alamin + GMP + H(+). It catalyses the reaction alpha-ribazole 5'-phosphate + adenosylcob(III)inamide-GDP = adenosylcob(III)alamin 5'-phosphate + GMP + H(+). It participates in cofactor biosynthesis; adenosylcobalamin biosynthesis; adenosylcobalamin from cob(II)yrinate a,c-diamide: step 7/7. Joins adenosylcobinamide-GDP and alpha-ribazole to generate adenosylcobalamin (Ado-cobalamin). Also synthesizes adenosylcobalamin 5'-phosphate from adenosylcobinamide-GDP and alpha-ribazole 5'-phosphate. The protein is Adenosylcobinamide-GDP ribazoletransferase of Shewanella baltica (strain OS185).